Here is a 2967-residue protein sequence, read N- to C-terminus: BEACH domain-containing protein lvsD (2967 aa).

10 disordered regions span residues 1–25, 322–364, 588–615, 917–936, 1077–1105, 1173–1220, 1583–1613, 1831–1859, 1921–2009, and 2029–2062; these read MSSP…RIGG, NNNN…SSNS, ILSI…QQQL, NNSN…NNIN, GGSN…KDKD, NTSS…SDHR, NNNS…NNEN, QQQQ…SSVV, PQKT…TLNN, and KSTL…NNKN. A BEACH 1 domain is found at 229–491; sequence MTFRKAPSSV…QDLFRKGSNY (263 aa). The segment covering 1079 to 1092 has biased composition (low complexity); the sequence is SNNNNNNNNNNSNN. Basic and acidic residues predominate over residues 1093-1105; it reads NKDKIDSNNKDKD. Low complexity-rich tracts occupy residues 1185 to 1194, 1583 to 1611, 1831 to 1857, 1926 to 1980, 1993 to 2006, and 2034 to 2062; these read PLLTSTKSMS, NNNS…LNNN, QQQQ…SSSS, QNQH…SFSN, NIIT…TTST, and SSSS…NNKN. In terms of domain architecture, BEACH-type PH spans 2060–2162; sequence NKNIKLEFST…ICAQILKLIG (103 aa). BEACH domains lie at 2202–2492 and 2628–2785; these read TPQQ…HPQR and NSRV…IYSN. 2 WD repeats span residues 2658–2710 and 2720–2761; these read NHKS…SDHH and GHNF…KSIQ. 2 disordered regions span residues 2798–2820 and 2915–2934; these read SATT…SSNT and PSTS…NNGN. 2 stretches are compositionally biased toward low complexity: residues 2811 to 2820 and 2924 to 2934; these read SSSSLSSSNT and NSNNNNNNNGN.

This Dictyostelium discoideum (Social amoeba) protein is BEACH domain-containing protein lvsD (lvsD).